The sequence spans 94 residues: ESAT-6-like protein EsxL (94 aa).

The protein belongs to the WXG100 family. ESAT-6 subfamily. In terms of assembly, strongly interacts with EsxK to form a heterodimeric complex under reducing conditions.

The protein resides in the secreted. The chain is ESAT-6-like protein EsxL from Mycobacterium tuberculosis (strain CDC 1551 / Oshkosh).